The following is a 64-amino-acid chain: Large ribosomal subunit protein uL30 (64 aa).

In terms of assembly, part of the 50S ribosomal subunit. In terms of processing, the protein is methylated on either Ala-2 or Lys-3.

This chain is Large ribosomal subunit protein uL30, found in Rhodopseudomonas palustris (strain ATCC BAA-98 / CGA009).